A 469-amino-acid polypeptide reads, in one-letter code: MSEQLSEHISVQTAQMAQVLVKIVNDKYQWIEERKAKQPLASFHPLLTRSERDFYQALSGDNTVFILECKKASPSKGLIREEFDLDYIASVYGEYASAISVLTDEKYFQGRFEFLPQVRAQVAQPVLCKDFMVDPYQVYLARHYQADAILLMLSVLNDDQYRELAAVAHDLGMGVLTEVSNEQELKRAVDLQAKVIGINNRNLRDLTTDLNRTKQLAPLIPQGTIIISESGIYTHQQVRDLAEFANGFLIGSSLMAQSNLELAVRKIVLGEHKVCGLTHPDDAVKAYQAGSVFGGLIFVEKSKRFVDVEQARLTMSGAPLQYVGVFQNHPAAQVADIATKLGLFAVQLHGEEDSAYVSELRASLPESIEIWKAYGVSDALPELLPEHIDRHLLDAKVGEQSGGTGRSFDWRLLPKHSDLMLAGGLSAENVAQAAQLGCRGLDFNSGVESAPGKKDANQLQQVFQQLRNY.

The segment at 1 to 271 (MSEQLSEHIS…LAVRKIVLGE (271 aa)) is indole-3-glycerol phosphate synthase. The segment at 272–469 (HKVCGLTHPD…QQVFQQLRNY (198 aa)) is N-(5'-phosphoribosyl)anthranilate isomerase.

In the N-terminal section; belongs to the TrpC family. This sequence in the C-terminal section; belongs to the TrpF family. As to quaternary structure, monomer.

It carries out the reaction N-(5-phospho-beta-D-ribosyl)anthranilate = 1-(2-carboxyphenylamino)-1-deoxy-D-ribulose 5-phosphate. The enzyme catalyses 1-(2-carboxyphenylamino)-1-deoxy-D-ribulose 5-phosphate + H(+) = (1S,2R)-1-C-(indol-3-yl)glycerol 3-phosphate + CO2 + H2O. Its pathway is amino-acid biosynthesis; L-tryptophan biosynthesis; L-tryptophan from chorismate: step 3/5. It participates in amino-acid biosynthesis; L-tryptophan biosynthesis; L-tryptophan from chorismate: step 4/5. In terms of biological role, bifunctional enzyme that catalyzes two sequential steps of tryptophan biosynthetic pathway. The first reaction is catalyzed by the isomerase, coded by the TrpF domain; the second reaction is catalyzed by the synthase, coded by the TrpC domain. The chain is Tryptophan biosynthesis protein TrpCF (trpCF) from Vibrio cholerae serotype O1 (strain ATCC 39315 / El Tor Inaba N16961).